The sequence spans 362 residues: Adenosine kinase (362 aa).

The residue at position 2 (A2) is an N-acetylalanine. Residues 8 to 16 carry the Nuclear localization signal motif; the sequence is PKPKKLKVE. D35 contacts adenosine. S49 is a Mg(2+) binding site. Phosphotyrosine is present on Y77. Mg(2+) contacts are provided by D147 and N148. Residue Q306 coordinates adenosine. The active-site Proton acceptor is D317.

It belongs to the carbohydrate kinase PfkB family. In terms of assembly, monomer. The cofactor is Mg(2+). Widely expressed. Highest level in placenta, liver, muscle and kidney.

It localises to the nucleus. The protein resides in the cytoplasm. It carries out the reaction adenosine + ATP = AMP + ADP + H(+). The protein operates within purine metabolism; AMP biosynthesis via salvage pathway; AMP from adenosine: step 1/1. Its activity is regulated as follows. Activity is inhibited by 5-iodotubercidin and 5'-amino-5'-deoxyadenosine. Functionally, catalyzes the phosphorylation of the purine nucleoside adenosine at the 5' position in an ATP-dependent manner. Serves as a potential regulator of concentrations of extracellular adenosine and intracellular adenine nucleotides. In Homo sapiens (Human), this protein is Adenosine kinase.